The primary structure comprises 595 residues: Neuroepithelial cell-transforming gene 1 protein (595 aa).

An N-acetylmethionine modification is found at Met1. Positions Met1–Glu42 are disordered. A necessary for nuclear localization region spans residues Met1–Asp74. A Nuclear localization signal motif is present at residues Arg12–Arg19. Ser21 is subject to Phosphoserine. The Nuclear localization signal signature appears at Lys66 to Lys72. Phosphoserine occurs at positions 100, 106, and 122. Residues Gly127 to Arg151 form a disordered region. Polar residues predominate over residues Ala133–Thr146. The 183-residue stretch at Lys174–Lys356 folds into the DH domain. Residues Val386–Ala501 enclose the PH domain. Ser508 is subject to Phosphoserine. The segment at Cys555–Val595 is disordered.

As to quaternary structure, interacts with RHOA in its GTP- and GDP-bound states, and with CDC42 in its GTP-bound state. Interacts with the PDZ 1 domain of BAIAP1.

It localises to the cytoplasm. It is found in the nucleus. Functionally, acts as a guanine nucleotide exchange factor (GEF) for RhoA GTPase. May be involved in activation of the SAPK/JNK pathway. Stimulates genotoxic stress-induced RHOB activity in breast cancer cells leading to their cell death. This Mus musculus (Mouse) protein is Neuroepithelial cell-transforming gene 1 protein (Net1).